Reading from the N-terminus, the 112-residue chain is Mitochondrial import inner membrane translocase subunit TIM14-1 (112 aa).

A2 carries the N-acetylalanine modification. A helical membrane pass occupies residues 7–23 (AGVAVAATALAGRYGIQ). The region spanning 53-112 (EAALILGVRESVAAEKVKEAHRKVMVANHPDAGGSHFLASKINEAKDVMLGKTKNSGSAF) is the J domain.

It belongs to the TIM14 family. Probable component of the PAM complex at least composed of a mitochondrial HSP70 protein, TIMM44 and TIMM14. The complex interacts with the TIMM23 component of the TIM17:23 complex.

The protein localises to the mitochondrion. Its subcellular location is the mitochondrion inner membrane. Functionally, component of the PAM complex, a complex required for the translocation of transit peptide-containing proteins from the inner membrane into the mitochondrial matrix in an ATP-dependent manner. In Arabidopsis thaliana (Mouse-ear cress), this protein is Mitochondrial import inner membrane translocase subunit TIM14-1 (TIM14-1).